We begin with the raw amino-acid sequence, 276 residues long: Formamidopyrimidine-DNA glycosylase (276 aa).

Pro2 acts as the Schiff-base intermediate with DNA in catalysis. Glu3 acts as the Proton donor in catalysis. Lys60 acts as the Proton donor; for beta-elimination activity in catalysis. Residues His93 and Arg112 each coordinate DNA. Residues 240 to 274 (HVYGRKQQPCHHCDTAIEKTVVGGRGTHYCPNCQP) form an FPG-type zinc finger. Catalysis depends on Arg264, which acts as the Proton donor; for delta-elimination activity.

It belongs to the FPG family. In terms of assembly, monomer. Zn(2+) is required as a cofactor.

The enzyme catalyses Hydrolysis of DNA containing ring-opened 7-methylguanine residues, releasing 2,6-diamino-4-hydroxy-5-(N-methyl)formamidopyrimidine.. It catalyses the reaction 2'-deoxyribonucleotide-(2'-deoxyribose 5'-phosphate)-2'-deoxyribonucleotide-DNA = a 3'-end 2'-deoxyribonucleotide-(2,3-dehydro-2,3-deoxyribose 5'-phosphate)-DNA + a 5'-end 5'-phospho-2'-deoxyribonucleoside-DNA + H(+). Its function is as follows. Involved in base excision repair of DNA damaged by oxidation or by mutagenic agents. Acts as a DNA glycosylase that recognizes and removes damaged bases. Has a preference for oxidized purines, such as 7,8-dihydro-8-oxoguanine (8-oxoG). Has AP (apurinic/apyrimidinic) lyase activity and introduces nicks in the DNA strand. Cleaves the DNA backbone by beta-delta elimination to generate a single-strand break at the site of the removed base with both 3'- and 5'-phosphates. The sequence is that of Formamidopyrimidine-DNA glycosylase from Shouchella clausii (strain KSM-K16) (Alkalihalobacillus clausii).